We begin with the raw amino-acid sequence, 232 residues long: Phosphatidylserine decarboxylase proenzyme (232 aa).

Serine 190 functions as the Schiff-base intermediate with substrate; via pyruvic acid in the catalytic mechanism. Serine 190 is modified (pyruvic acid (Ser); by autocatalysis).

It belongs to the phosphatidylserine decarboxylase family. PSD-A subfamily. Heterodimer of a large membrane-associated beta subunit and a small pyruvoyl-containing alpha subunit. Pyruvate serves as cofactor. Post-translationally, is synthesized initially as an inactive proenzyme. Formation of the active enzyme involves a self-maturation process in which the active site pyruvoyl group is generated from an internal serine residue via an autocatalytic post-translational modification. Two non-identical subunits are generated from the proenzyme in this reaction, and the pyruvate is formed at the N-terminus of the alpha chain, which is derived from the carboxyl end of the proenzyme. The post-translation cleavage follows an unusual pathway, termed non-hydrolytic serinolysis, in which the side chain hydroxyl group of the serine supplies its oxygen atom to form the C-terminus of the beta chain, while the remainder of the serine residue undergoes an oxidative deamination to produce ammonia and the pyruvoyl prosthetic group on the alpha chain.

It localises to the cell membrane. The catalysed reaction is a 1,2-diacyl-sn-glycero-3-phospho-L-serine + H(+) = a 1,2-diacyl-sn-glycero-3-phosphoethanolamine + CO2. Its pathway is phospholipid metabolism; phosphatidylethanolamine biosynthesis; phosphatidylethanolamine from CDP-diacylglycerol: step 2/2. Catalyzes the formation of phosphatidylethanolamine (PtdEtn) from phosphatidylserine (PtdSer). The protein is Phosphatidylserine decarboxylase proenzyme of Rhodopseudomonas palustris (strain BisA53).